The sequence spans 3081 residues: Cilia- and flagella-associated protein 54 (3081 aa).

Disordered regions lie at residues 542 to 579, 591 to 626, 910 to 942, 1406 to 1451, 1518 to 1586, 1636 to 1657, 2176 to 2210, 2229 to 2306, and 2776 to 2806; these read SGTA…AGGA, TQTA…QSSL, PPQP…GARK, ADAP…GITP, ESIL…YPVV, RRAA…EERP, GERT…LPEP, MASG…SQRA, and ARPV…SGDG. The segment covering 564–579 has biased composition (low complexity); the sequence is GGSASPPNGSSGAGGA. Residues 1428–1449 show a composition bias toward pro residues; sequence MPPPVPDPSAAGPPPLTPPEGI. Residues 1538-1550 show a composition bias toward basic and acidic residues; it reads GGKDDKKKDDKAP. 3 stretches are compositionally biased toward low complexity: residues 1638 to 1648, 2181 to 2199, and 2240 to 2269; these read AALAASASTAG, APKP…AAAA, and EPSS…SPTG. Positions 2289-2301 are enriched in pro residues; that stretch reads PEVPGPPPPPPPS. A compositionally biased stretch (low complexity) spans 2776–2788; that stretch reads ARPVATSSSGARP. Over residues 2796-2805 the composition is skewed to gly residues; the sequence is KPGAGGGSGD.

Belongs to the CFAP54 family. As to quaternary structure, part of the PDCP1 complex composed of CFAP46, CFAP54, CFAP74 and CFAP221; the PDCP1 complex binds calmodulin.

The protein resides in the cytoplasm. The protein localises to the cytoskeleton. Its subcellular location is the cilium axoneme. The chain is Cilia- and flagella-associated protein 54 from Chlamydomonas reinhardtii (Chlamydomonas smithii).